Here is a 94-residue protein sequence, read N- to C-terminus: AFAGVLADADIKAALAGCAAADSFNYKTFFKACGLFFAIIDQDHSGFIEEEELKLFLQTFSAGARALSDAETKTFLAAGDVDGDGMIGVDEFAA.

Ala1 is modified (N-acetylalanine). 2 consecutive EF-hand domains span residues 36–63 and 67–94; these read FFAI…FSAG and LSDA…EFAA. 11 residues coordinate Ca(2+): Asp41, Asp43, Ser45, Phe47, Glu49, Glu52, Asp80, Asp82, Asp84, Met86, and Glu91.

Belongs to the parvalbumin family.

In terms of biological role, in muscle, parvalbumin is thought to be involved in relaxation after contraction. It binds two calcium ions. This Merluccius bilinearis (Silver hake) protein is Parvalbumin beta 4.